We begin with the raw amino-acid sequence, 842 residues long: CRM-domain containing factor CFM3, chloroplastic/mitochondrial (842 aa).

The N-terminal 82 residues, 1–82 (MAMASSPACH…RSSGRSTMSL (82 aa)), are a transit peptide targeting the chloroplast and mitochondrion. Disordered regions lie at residues 49–80 (AALD…RSTM), 141–160 (RFPW…SARS), and 254–290 (VDYD…LPTE). The CRM 1 domain occupies 167 to 263 (LTLPAAELRR…VDYDEPEPTK (97 aa)). Positions 280–290 (GSSNPSLLPTE) are enriched in polar residues. CRM domains lie at 371–468 (PSLS…ELAE) and 582–682 (ETIT…SSLR). Residues 703-732 (QALSRHFAKLNRKVERLKAELVQMEDVKEQ) adopt a coiled-coil conformation. Residues 768–842 (VAGATADDDG…DRRNHDVNEY (75 aa)) form a disordered region. Residues 786–812 (DEADYPDSDDEAGDCSEDEGEDDEDEA) show a composition bias toward acidic residues. Residues 831–842 (DTDRRNHDVNEY) show a composition bias toward basic and acidic residues.

As to quaternary structure, interacts with RNA. Part of large ribonucleo-protein particles that contain CAF1 and/or CAF2, and RNC1.

It localises to the plastid. It is found in the chloroplast stroma. The protein localises to the mitochondrion. In terms of biological role, binds specific group II introns in chloroplasts and facilitates their splicing. Acts on subgroup IIB introns. The substrates of the subgroup IIB also require the CRM domain proteins CAF1 or CAF2, with a simultaneous binding of CFM3 and CAF1 or CAF2. May influence the biogenesis of the mitochondrial small ribosomal subunit. This Zea mays (Maize) protein is CRM-domain containing factor CFM3, chloroplastic/mitochondrial.